Consider the following 1021-residue polypeptide: Sodium/potassium-transporting ATPase subunit alpha-1 (1021 aa).

Positions 1–5 are excised as a propeptide; it reads MGKGG. Residues 1–11 show a composition bias toward basic and acidic residues; it reads MGKGGGRDKYE. The disordered stretch occupies residues 1–37; sequence MGKGGGRDKYEPAAISEHGNKKKAKKERDMDELKKEV. At 6–85 the chain is on the cytoplasmic side; the sequence is GRDKYEPAAI…NALTPPPTTP (80 aa). Lys-9 is subject to N6-acetyllysine. Residue Tyr-10 is modified to Phosphotyrosine. Ser-16 carries the post-translational modification Phosphoserine; by PKC. Position 21 is an N6-acetyllysine (Lys-21). Basic and acidic residues predominate over residues 26–37; the sequence is KERDMDELKKEV. Phosphoserine is present on residues Ser-38 and Ser-45. Residues 80–82 form a phosphoinositide-3 kinase binding region; the sequence is PPP. The chain crosses the membrane as a helical span at residues 86 to 106; it reads EWVKFCRQLFGGFSMLLWIGA. Residues 107 to 129 are Extracellular-facing; that stretch reads ILCFLAYGIQAATEEEPQNDNLY. The helical transmembrane segment at 130–150 threads the bilayer; that stretch reads LGVVLSAVVIITGCFSYYQEA. Over 151–286 the chain is Cytoplasmic; that stretch reads KSSKIMESFK…GGQTPIAAEI (136 aa). The disordered stretch occupies residues 214-233; sequence SSLTGESEPQTRSPDFTNEN. At Ser-226 the chain carries Phosphoserine. Residue Tyr-258 is modified to Phosphotyrosine. The chain crosses the membrane as a helical span at residues 287-306; sequence EHFIHIITGVAVFLGVTFFI. Over 307-318 the chain is Extracellular; the sequence is LSLILEYTWLEA. Residues 319–336 traverse the membrane as a helical segment; sequence VIFLIGIIVANVPEGLLA. Over 337–770 the chain is Cytoplasmic; that stretch reads TVTVCLTLTA…EEGRLIFDNL (434 aa). Asp-374 serves as the catalytic 4-aspartylphosphate intermediate. A phosphoserine mark is found at Ser-450 and Ser-482. Lys-485 serves as a coordination point for ATP. Position 540 is a phosphotyrosine (Tyr-540). The tract at residues 594 to 715 is mediates interaction with SCN7A; that stretch reads RAAVPDAVGK…QGAIVAVTGD (122 aa). Lys-659 is subject to N6-succinyllysine. Ser-666 is subject to Phosphoserine. Mg(2+) is bound by residues Asp-715 and Asp-719. A helical membrane pass occupies residues 771 to 790; sequence KKSIAYTLTSNIPEITPFLI. At 791 to 800 the chain is on the extracellular side; the sequence is FIIANIPLPL. A helical membrane pass occupies residues 801–821; that stretch reads GTVTILCIDLGTDMVPAISLA. The Cytoplasmic segment spans residues 822 to 841; that stretch reads YEQAESDIMKRQPRNPQTDK. A helical membrane pass occupies residues 842–864; it reads LVNERLISMAYGQIGMIQALGGF. At 865 to 916 the chain is on the extracellular side; it reads FTYFVILAENGFLPIHLLGLRVDWDDRWVNDVEDSYGQQWTYEQRKIVEFTC. The helical transmembrane segment at 917-936 threads the bilayer; the sequence is HTAFFVSIVVVQWADLVICK. Residues 937–949 lie on the Cytoplasmic side of the membrane; sequence TRRNSVFQQGMKN. Phosphoserine; by PKA is present on Ser-941. A helical membrane pass occupies residues 950-968; it reads KILIFGLFEETALAAFLSY. Residues 969-983 lie on the Extracellular side of the membrane; it reads CPGMGVALRMYPLKP. A helical membrane pass occupies residues 984 to 1004; it reads TWWFCAFPYSLLIFVYDEVRK. Topologically, residues 1005-1021 are cytoplasmic; it reads LIIRRRPGGWVEKETYY.

The protein belongs to the cation transport ATPase (P-type) (TC 3.A.3) family. Type IIC subfamily. As to quaternary structure, the sodium/potassium-transporting ATPase is composed of a catalytic alpha subunit, an auxiliary non-catalytic beta subunit and an additional regulatory subunit. Interacts with regulatory subunit FXYD1. Interacts with regulatory subunit FXYD3. Interacts with SIK1. Interacts with SLC35G1 and STIM1. Interacts with CLN3; this interaction regulates the sodium/potassium-transporting ATPase complex localization at the plasma membrane. Interacts with SCN7A; activates ATP1A1 P-type sodium:potassium-exchanging transporter activity which indirectly signals to nearby neurons to regulate sodium homeostasis. Post-translationally, phosphorylation on Tyr-10 modulates pumping activity. Phosphorylation of Ser-941 by PKA modulates the response of ATP1A1 to PKC. Dephosphorylation by protein phosphatase 2A (PP2A) following increases in intracellular sodium, leading to increase catalytic activity.

It is found in the cell membrane. It localises to the basolateral cell membrane. The protein resides in the sarcolemma. Its subcellular location is the cell projection. The protein localises to the axon. It is found in the melanosome. The catalysed reaction is K(+)(out) + Na(+)(in) + ATP + H2O = K(+)(in) + Na(+)(out) + ADP + phosphate + H(+). This is the catalytic component of the active enzyme, which catalyzes the hydrolysis of ATP coupled with the exchange of sodium and potassium ions across the plasma membrane. This action creates the electrochemical gradient of sodium and potassium ions, providing the energy for active transport of various nutrients. Could also be part of an osmosensory signaling pathway that senses body-fluid sodium levels and controls salt intake behavior as well as voluntary water intake to regulate sodium homeostasis. This is Sodium/potassium-transporting ATPase subunit alpha-1 (ATP1A1) from Equus caballus (Horse).